The following is a 315-amino-acid chain: Cross-pathway control WD-repeat protein 2 (315 aa).

WD repeat units lie at residues 14-54 (GHKG…DSYG), 62-101 (GHNHFVSDVVISSDGQFALSSSWDHTLRLWDLNTGATTRR), 104-144 (GHTS…YDIK), 147-188 (CHTE…LKTN), 191-230 (GHTGYINTVSVSPDGSLAASGGKDGITMLWDLNEGKHLYS), 232-270 (EAGDIVNALVFSPNRYWLCAATASCVKIFDLESKSIVDE), and 282-315 (GRQPECVSIAWSADGQTLFAGFTDNQLRVWTVTS).

It belongs to the WD repeat G protein beta family. Ribosomal protein RACK1 subfamily.

In terms of biological role, component of the ribosome, a large ribonucleoprotein complex responsible for the synthesis of proteins in the cell. The small ribosomal subunit (SSU) binds messenger RNAs (mRNAs) and translates the encoded message by selecting cognate aminoacyl-transfer RNA (tRNA) molecules. The large subunit (LSU) contains the ribosomal catalytic site termed the peptidyl transferase center (PTC), which catalyzes the formation of peptide bonds, thereby polymerizing the amino acids delivered by tRNAs into a polypeptide chain. The nascent polypeptides leave the ribosome through a tunnel in the LSU and interact with protein factors that function in enzymatic processing, targeting, and the membrane insertion of nascent chains at the exit of the ribosomal tunnel. Plays in important role in the regulation of vegetative growth and fruiting body development. Especially, positively regulates the expression of genes involved in fruiting body development such as FVFD30 and FVFD16, as well as genes encoding for lectins and hydrophobins. Also regulates the expression of genes involved in cAMP signaling pathway. The chain is Cross-pathway control WD-repeat protein 2 from Flammulina velutipes (Agaricus velutipes).